A 444-amino-acid chain; its full sequence is Argininosuccinate synthase (444 aa).

ATP-binding positions include 17–25 (AFSGGLDTS) and Ala-43. Tyr-99 contributes to the L-citrulline binding site. 2 residues coordinate ATP: Gly-129 and Thr-131. L-aspartate-binding residues include Thr-131, Asn-135, and Asp-136. Asn-135 lines the L-citrulline pocket. Asp-136 provides a ligand contact to ATP. Residues Arg-139 and Ser-192 each coordinate L-citrulline. ATP is bound at residue Asp-194. 3 residues coordinate L-citrulline: Thr-201, Glu-203, and Glu-280.

It belongs to the argininosuccinate synthase family. Type 2 subfamily. As to quaternary structure, homotetramer.

It is found in the cytoplasm. The enzyme catalyses L-citrulline + L-aspartate + ATP = 2-(N(omega)-L-arginino)succinate + AMP + diphosphate + H(+). It functions in the pathway amino-acid biosynthesis; L-arginine biosynthesis; L-arginine from L-ornithine and carbamoyl phosphate: step 2/3. The chain is Argininosuccinate synthase from Burkholderia lata (strain ATCC 17760 / DSM 23089 / LMG 22485 / NCIMB 9086 / R18194 / 383).